A 544-amino-acid polypeptide reads, in one-letter code: Probable protein kinase UbiB (544 aa).

One can recognise a Protein kinase domain in the interval 123–501 (DFDLVPLASA…KRQQATGKFL (379 aa)). Residues 129 to 137 (LASASIAQV) and Lys-152 contribute to the ATP site. Asp-287 acts as the Proton acceptor in catalysis. A run of 2 helical transmembrane segments spans residues 496–516 (ATGK…AILV) and 519–539 (TYEQ…LFSW).

Belongs to the ABC1 family. UbiB subfamily.

It is found in the cell inner membrane. Its pathway is cofactor biosynthesis; ubiquinone biosynthesis [regulation]. Its function is as follows. Is probably a protein kinase regulator of UbiI activity which is involved in aerobic coenzyme Q (ubiquinone) biosynthesis. This Vibrio vulnificus (strain YJ016) protein is Probable protein kinase UbiB.